Reading from the N-terminus, the 306-residue chain is Acetaldehyde dehydrogenase 2/3 (306 aa).

Cys130 acts as the Acyl-thioester intermediate in catalysis. NAD(+)-binding positions include 161–169 (SAGPGTRKN) and Asn272.

The protein belongs to the acetaldehyde dehydrogenase family.

It carries out the reaction acetaldehyde + NAD(+) + CoA = acetyl-CoA + NADH + H(+). This is Acetaldehyde dehydrogenase 2/3 (mhpF) from Azoarcus sp. (strain BH72).